Consider the following 414-residue polypeptide: Pre-mRNA-processing protein 45 (414 aa).

2 disordered regions span residues 128–159 and 264–292; these read ESKR…DTPI and RSKI…KKIK. A compositionally biased stretch (polar residues) spans 135 to 146; sequence LQPSRQKNTSSK.

It belongs to the SNW family. Associated with the spliceosome.

Its subcellular location is the nucleus. In terms of biological role, involved in pre-mRNA splicing. The protein is Pre-mRNA-processing protein 45 (PRP45) of Candida glabrata (strain ATCC 2001 / BCRC 20586 / JCM 3761 / NBRC 0622 / NRRL Y-65 / CBS 138) (Yeast).